Here is a 154-residue protein sequence, read N- to C-terminus: Large ribosomal subunit protein uL30 (154 aa).

Belongs to the universal ribosomal protein uL30 family. Part of the 50S ribosomal subunit.

The protein is Large ribosomal subunit protein uL30 of Methanococcus maripaludis (strain DSM 14266 / JCM 13030 / NBRC 101832 / S2 / LL).